The sequence spans 1375 residues: DNA-directed RNA polymerase subunit beta (1375 aa).

The protein belongs to the RNA polymerase beta chain family. The RNAP catalytic core consists of 2 alpha, 1 beta, 1 beta' and 1 omega subunit. When a sigma factor is associated with the core the holoenzyme is formed, which can initiate transcription.

It carries out the reaction RNA(n) + a ribonucleoside 5'-triphosphate = RNA(n+1) + diphosphate. In terms of biological role, DNA-dependent RNA polymerase catalyzes the transcription of DNA into RNA using the four ribonucleoside triphosphates as substrates. The polypeptide is DNA-directed RNA polymerase subunit beta (Coxiella burnetii (strain CbuG_Q212) (Coxiella burnetii (strain Q212))).